A 110-amino-acid polypeptide reads, in one-letter code: Red pigment-concentrating prohormone (110 aa).

An N-terminal signal peptide occupies residues 1–25 (MVRRTGVTLLVVALVVVALVSSVSA). Position 26 is a pyrrolidone carboxylic acid (Gln-26). Trp-33 bears the Tryptophan amide mark.

It belongs to the AKH/HRTH/RPCH family.

It localises to the secreted. In terms of biological role, this hormone adapts the animal to light backgrounds by stimulating concentration of the pigment of its red body-chromatophores. The protein is Red pigment-concentrating prohormone of Carcinus maenas (Common shore crab).